Consider the following 327-residue polypeptide: MEAIKGSDVNVPDAVFAWLLDGHGGVKPLEDNDVIDSQHPCWLHLNYTHPDSARWLASTPLLPNNVRDALAGESSRPRVSRMGEGTLITLRCINGSTDERPDQLVAMRLYMDERFIVSTRQRKVLALDDVVSDLQEGTGPVDCGGWLVDVCDALTDHASEFIEELHDKIIDLEDNLLDQQIPPRGFLALLRKQLIVMRRYMAPQRDVYARLASERLPWMSDDHRRRMQDIADRLGRGLDEIDACIARTGIMADEIAQVMQESLARRTYTMSLMAMVFLPSTFLTGLFGVNLGGIPGGGWRFGFSLFCILLVVLIGGVTLWLHRSKWL.

Residues 1–273 (MEAIKGSDVN…ARRTYTMSLM (273 aa)) are Cytoplasmic-facing. Residues 274–294 (AMVFLPSTFLTGLFGVNLGGI) traverse the membrane as a helical segment. The Periplasmic segment spans residues 295–300 (PGGGWR). The helical transmembrane segment at 301-321 (FGFSLFCILLVVLIGGVTLWL) threads the bilayer. Topologically, residues 322–327 (HRSKWL) are cytoplasmic.

It belongs to the CorA metal ion transporter (MIT) (TC 1.A.35) family.

It localises to the cell inner membrane. The enzyme catalyses Zn(2+)(out) + H(+)(out) = Zn(2+)(in) + H(+)(in). Functionally, zinc transporter. Acts as a Zn(2+):proton symporter, which likely mediates zinc ion uptake. The sequence is that of Zinc transport protein ZntB from Salmonella choleraesuis (strain SC-B67).